Here is a 314-residue protein sequence, read N- to C-terminus: Ribosomal protein L11 methyltransferase (314 aa).

S-adenosyl-L-methionine contacts are provided by Thr-166, Gly-187, Asp-209, and Asn-251.

This sequence belongs to the methyltransferase superfamily. PrmA family.

It localises to the cytoplasm. The enzyme catalyses L-lysyl-[protein] + 3 S-adenosyl-L-methionine = N(6),N(6),N(6)-trimethyl-L-lysyl-[protein] + 3 S-adenosyl-L-homocysteine + 3 H(+). In terms of biological role, methylates ribosomal protein L11. This chain is Ribosomal protein L11 methyltransferase, found in Clostridium tetani (strain Massachusetts / E88).